The sequence spans 267 residues: Glutamate racemase (267 aa).

Residues 9-10 (DS) and 41-42 (YS) each bind substrate. The Proton donor/acceptor role is filled by Cys73. Substrate is bound at residue 74 to 75 (NT). Cys184 serves as the catalytic Proton donor/acceptor. 185–186 (TH) serves as a coordination point for substrate.

The protein belongs to the aspartate/glutamate racemases family.

The catalysed reaction is L-glutamate = D-glutamate. It functions in the pathway cell wall biogenesis; peptidoglycan biosynthesis. Functionally, provides the (R)-glutamate required for cell wall biosynthesis. The protein is Glutamate racemase of Actinobacillus pleuropneumoniae serotype 7 (strain AP76).